A 350-amino-acid chain; its full sequence is Glycerol-1-phosphate dehydrogenase [NAD(P)+] (350 aa).

NAD(+) contacts are provided by residues 97–101 (GSIID) and 119–122 (TTAS). Residue Asp124 participates in substrate binding. An NAD(+)-binding site is contributed by Ser128. Residue Asp171 participates in substrate binding. Residues Asp171 and His251 each coordinate Zn(2+). His255 provides a ligand contact to substrate. His267 contributes to the Zn(2+) binding site.

Belongs to the glycerol-1-phosphate dehydrogenase family. Zn(2+) is required as a cofactor.

It localises to the cytoplasm. It carries out the reaction sn-glycerol 1-phosphate + NAD(+) = dihydroxyacetone phosphate + NADH + H(+). The enzyme catalyses sn-glycerol 1-phosphate + NADP(+) = dihydroxyacetone phosphate + NADPH + H(+). The protein operates within membrane lipid metabolism; glycerophospholipid metabolism. In terms of biological role, catalyzes the NAD(P)H-dependent reduction of dihydroxyacetonephosphate (DHAP or glycerone phosphate) to glycerol 1-phosphate (G1P). The G1P thus generated is used as the glycerophosphate backbone of phospholipids in the cellular membranes of Archaea. The sequence is that of Glycerol-1-phosphate dehydrogenase [NAD(P)+] from Thermococcus sibiricus (strain DSM 12597 / MM 739).